Reading from the N-terminus, the 433-residue chain is Trigger factor (433 aa).

One can recognise a PPIase FKBP-type domain in the interval 163–248 (GNFVVIDFVG…VKEAKVKELP (86 aa)).

Belongs to the FKBP-type PPIase family. Tig subfamily.

The protein localises to the cytoplasm. It carries out the reaction [protein]-peptidylproline (omega=180) = [protein]-peptidylproline (omega=0). In terms of biological role, involved in protein export. Acts as a chaperone by maintaining the newly synthesized protein in an open conformation. Functions as a peptidyl-prolyl cis-trans isomerase. The chain is Trigger factor from Geobacter metallireducens (strain ATCC 53774 / DSM 7210 / GS-15).